A 382-amino-acid polypeptide reads, in one-letter code: Neuropeptide Y receptor type 1 (382 aa).

Over Met-1 to His-33 the chain is Extracellular. N-linked (GlcNAc...) asparagine glycans are attached at residues Asn-2, Asn-11, and Asn-17. Residues Leu-34–Val-54 form a helical membrane-spanning segment. Over Ser-55 to Asn-75 the chain is Cytoplasmic. The chain crosses the membrane as a helical span at residues Ile-76 to Thr-96. Topologically, residues Phe-97 to Asn-115 are extracellular. Cys-112 and Cys-197 form a disulfide bridge. Residues Pro-116–Glu-136 traverse the membrane as a helical segment. Residues Arg-137–His-153 lie on the Cytoplasmic side of the membrane. A helical transmembrane segment spans residues Ala-154–Ile-174. Over Tyr-175 to Tyr-210 the chain is Extracellular. The helical transmembrane segment at Thr-211–Phe-231 threads the bilayer. The Cytoplasmic portion of the chain corresponds to Lys-232 to Arg-259. A helical membrane pass occupies residues Ile-260–Ile-280. The Extracellular segment spans residues Phe-281–Asn-298. Residues Leu-299–Tyr-319 form a helical membrane-spanning segment. At Gly-320–Ile-382 the chain is on the cytoplasmic side. Cys-337 carries S-palmitoyl cysteine lipidation. Phosphoserine occurs at positions 367 and 375.

The protein belongs to the G-protein coupled receptor 1 family. In terms of tissue distribution, brain.

The protein localises to the cell membrane. Functionally, receptor for neuropeptide Y and peptide YY. In Rattus norvegicus (Rat), this protein is Neuropeptide Y receptor type 1 (Npy1r).